A 704-amino-acid chain; its full sequence is Polyribonucleotide nucleotidyltransferase (704 aa).

Asp-485 and Asp-491 together coordinate Mg(2+). The 60-residue stretch at 552–611 (PKTETIQIDPDKIRSVIGAGGKVINKIIQDTGVKIDIKEDGSVFVSSSDHAGVKEAIKII) folds into the KH domain. The S1 motif domain maps to 621–689 (GEIYLGKVTK…SQGRINLSRK (69 aa)).

Belongs to the polyribonucleotide nucleotidyltransferase family. Mg(2+) serves as cofactor.

It localises to the cytoplasm. It catalyses the reaction RNA(n+1) + phosphate = RNA(n) + a ribonucleoside 5'-diphosphate. In terms of biological role, involved in mRNA degradation. Catalyzes the phosphorolysis of single-stranded polyribonucleotides processively in the 3'- to 5'-direction. This is Polyribonucleotide nucleotidyltransferase from Clostridium botulinum (strain Eklund 17B / Type B).